The primary structure comprises 172 residues: Trypsin inhibitor 1A (172 aa).

2 cysteine pairs are disulfide-bonded: Cys40-Cys84 and Cys133-Cys139.

It belongs to the protease inhibitor I3 (leguminous Kunitz-type inhibitor) family.

Its function is as follows. WTI-1B inhibits trypsin stoichiometrically. The sequence is that of Trypsin inhibitor 1A from Psophocarpus tetragonolobus (Winged bean).